A 392-amino-acid chain; its full sequence is Iripin-4 (392 aa).

The first 16 residues, 1–16 (MRSLATFMSLLTICWG), serve as a signal peptide directing secretion. Asn-104, Asn-130, and Asn-265 each carry an N-linked (GlcNAc...) asparagine glycan.

Belongs to the serpin family. Female salivary gland.

Its subcellular location is the secreted. Functionally, serpin with unknown function. Weakly inhibits human granzyme B (GZMB). Acts as a substrate for porcine elastase. This chain is Iripin-4, found in Ixodes ricinus (Common tick).